The primary structure comprises 535 residues: CTP synthase (535 aa).

A Glutamine amidotransferase type-1 domain is found at 300-535 (RIGIVGKYAP…LVSASYERSK (236 aa)). Active-site for GATase activity residues include Cys385, His509, and Glu511.

It belongs to the CTP synthase family.

It catalyses the reaction UTP + L-glutamine + ATP + H2O = CTP + L-glutamate + ADP + phosphate + 2 H(+). The protein operates within pyrimidine metabolism; CTP biosynthesis via de novo pathway; CTP from UDP: step 2/2. In terms of biological role, catalyzes the ATP-dependent amination of UTP to CTP with either L-glutamine or ammonia as the source of nitrogen. The protein is CTP synthase of Encephalitozoon cuniculi (strain GB-M1) (Microsporidian parasite).